Here is a 141-residue protein sequence, read N- to C-terminus: Hemoglobin subunit alpha-D (141 aa).

The 141-residue stretch at Met-1–Arg-141 folds into the Globin domain. Residues His-58 and His-87 each contribute to the heme b site.

This sequence belongs to the globin family. In terms of assembly, heterotetramer of two alpha-D chains and two beta chains. In terms of tissue distribution, red blood cells.

In terms of biological role, involved in oxygen transport from the lung to the various peripheral tissues. This Phalacrocorax carbo (Great cormorant) protein is Hemoglobin subunit alpha-D (HBAD).